A 161-amino-acid polypeptide reads, in one-letter code: Endoribonuclease YbeY (161 aa).

Zn(2+)-binding residues include H121, H125, and H131.

The protein belongs to the endoribonuclease YbeY family. The cofactor is Zn(2+).

It localises to the cytoplasm. Single strand-specific metallo-endoribonuclease involved in late-stage 70S ribosome quality control and in maturation of the 3' terminus of the 16S rRNA. The sequence is that of Endoribonuclease YbeY from Xanthomonas oryzae pv. oryzae (strain MAFF 311018).